The primary structure comprises 168 residues: G/U mismatch-specific DNA glycosylase (168 aa).

This sequence belongs to the uracil-DNA glycosylase (UDG) superfamily. TDG/mug family. In terms of assembly, binds DNA as a monomer.

It localises to the cytoplasm. It carries out the reaction Specifically hydrolyzes mismatched double-stranded DNA and polynucleotides, releasing free uracil.. Functionally, excises ethenocytosine and uracil, which can arise by alkylation or deamination of cytosine, respectively, from the corresponding mispairs with guanine in ds-DNA. It is capable of hydrolyzing the carbon-nitrogen bond between the sugar-phosphate backbone of the DNA and the mispaired base. The complementary strand guanine functions in substrate recognition. Required for DNA damage lesion repair in stationary-phase cells. This chain is G/U mismatch-specific DNA glycosylase, found in Escherichia coli O139:H28 (strain E24377A / ETEC).